A 354-amino-acid polypeptide reads, in one-letter code: Guanine nucleotide-binding protein alpha-3 subunit (354 aa).

Glycine 2 carries the N-myristoyl glycine lipid modification. A lipid anchor (S-palmitoyl cysteine) is attached at cysteine 4. A G-alpha domain is found at 33-354 (KECKILLLGS…TNALKDSGIL (322 aa)). Positions 36–49 (KILLLGSGESGKST) are G1 motif. GTP is bound by residues 41-48 (GSGESGKS), 177-183 (LRARSKT), 202-206 (DVGGQ), 271-274 (NKID), and alanine 326. 2 residues coordinate Mg(2+): serine 48 and threonine 183. The segment at 175–183 (DVLRARSKT) is G2 motif. Residues 198 to 207 (IHLFDVGGQR) are G3 motif. The interval 267-274 (ILFLNKID) is G4 motif. Residues 324–329 (TQATDT) form a G5 motif region.

Belongs to the G-alpha family. As to quaternary structure, g proteins are composed of 3 units; alpha, beta and gamma. The alpha chain contains the guanine nucleotide binding site.

In terms of biological role, guanine nucleotide-binding proteins (G proteins) are involved as modulators or transducers in various transmembrane signaling systems. GPA3 plays an active role in transmission of the pheromone signal. This Mycosarcoma maydis (Corn smut fungus) protein is Guanine nucleotide-binding protein alpha-3 subunit (GPA3).